The sequence spans 117 residues: Hydrogenase maturation factor HypA (117 aa).

Position 2 (His2) interacts with Ni(2+). Zn(2+)-binding residues include Cys74, Cys77, Cys91, and Cys94.

The protein belongs to the HypA/HybF family.

In terms of biological role, involved in the maturation of [NiFe] hydrogenases. Required for nickel insertion into the metal center of the hydrogenase. This Helicobacter pylori (strain J99 / ATCC 700824) (Campylobacter pylori J99) protein is Hydrogenase maturation factor HypA.